A 303-amino-acid polypeptide reads, in one-letter code: Aquaporin-7 (303 aa).

At 1–21 (MAPRSVLETIQSVLQKNMVRE) the chain is on the cytoplasmic side. Residue S5 is modified to Phosphoserine. A helical membrane pass occupies residues 22–39 (FLAEFLSTYVMMVFGLGS). Residues 40–52 (VAHMVLGENSGSY) lie on the Extracellular side of the membrane. The chain crosses the membrane as a helical span at residues 53 to 70 (LGVNLGFGFGVTMGVHVA). The Cytoplasmic segment spans residues 71 to 74 (GGIS). An intramembrane region (discontinuously helical) is located at residues 75–88 (GAHMNAAVTFTNCA). The short motif at 79 to 81 (NAA) is the NPA 1 element. Topologically, residues 89–96 (LGRMTWKK) are cytoplasmic. The chain crosses the membrane as a helical span at residues 97–117 (FPVYVLGQFLGSFSAAATTYL). Residues 118–152 (IFYGAINHFAGGDLLVTGSKATANIFATYLPEYMT) lie on the Extracellular side of the membrane. The chain crosses the membrane as a helical span at residues 153-173 (LWRGFLDEAFVTGMLQLCLFA). The Cytoplasmic portion of the chain corresponds to 174-185 (ITDKKNSPALQG). Residues 186-202 (TEPLVIGILVTVLGVSL) form a helical membrane-spanning segment. Residues 203–206 (GMNS) lie on the Extracellular side of the membrane. Residues 207 to 220 (GYAINPSRDLPPRL) constitute an intramembrane region (discontinuously helical). The NPA 2 signature appears at 211 to 213 (NPS). The Extracellular portion of the chain corresponds to 221–238 (FTFIAGWGKQVFRAGNNW). A helical membrane pass occupies residues 239 to 260 (WWVPVVAPLLGAYLGGIVYLGL). Residues 261–303 (IHPSIPQDPQRLENFTARDQKVTASYKNAASANISGSVPLEHF) lie on the Cytoplasmic side of the membrane.

The protein belongs to the MIP/aquaporin (TC 1.A.8) family. In terms of assembly, homotetramer; each monomer provides an independent glycerol/water pore. Two homotetramers on opposing membranes can dimerize, forming a cell-cell junction. Interacts with PLIN1. In terms of processing, phosphorylation by PKA could prevent the interaction with PLIN1. As to expression, detected in proximal tubules in kidney. Detected in the capillary network between muscle fibers in skeletal muscle and heart, and in spermatids and on spermatozoa tails in testis and epididymis. Detected in white and brown adipose tissue, especially on small blood vessels (at protein level). Detected in kidney and white adipose tissue.

It is found in the cell membrane. The protein localises to the cytoplasmic vesicle membrane. The protein resides in the lipid droplet. The enzyme catalyses glycerol(in) = glycerol(out). The catalysed reaction is H2O(in) = H2O(out). It carries out the reaction urea(in) = urea(out). With respect to regulation, glycerol transport is regulated by pH, with the porin being permeable to glycerol at pH 7.4 but not at pH 5.5. Water permeability, however, is not influenced by pH. In terms of biological role, aquaglyceroporins form homotetrameric transmembrane channels, with each monomer independently mediating glycerol and water transport across the plasma membrane along their osmotic gradient. Could also be permeable to urea. Mediates the efflux of glycerol, formed upon triglyceride hydrolysis, to avoid its accumulation in adipocytes and to make it available to other tissues. In the kidney, mediates the reabsorption of glycerol, preventing its loss in urine, again participating to energy homeostasis. In pancreatic beta cells, it also mediates the efflux of glycerol, regulating its intracellular levels. In Mus musculus (Mouse), this protein is Aquaporin-7.